Reading from the N-terminus, the 93-residue chain is Small ribosomal subunit protein uS15 (93 aa).

This sequence belongs to the universal ribosomal protein uS15 family. Part of the 30S ribosomal subunit. Forms a bridge to the 50S subunit in the 70S ribosome, contacting the 23S rRNA.

In terms of biological role, one of the primary rRNA binding proteins, it binds directly to 16S rRNA where it helps nucleate assembly of the platform of the 30S subunit by binding and bridging several RNA helices of the 16S rRNA. Functionally, forms an intersubunit bridge (bridge B4) with the 23S rRNA of the 50S subunit in the ribosome. The sequence is that of Small ribosomal subunit protein uS15 from Ehrlichia chaffeensis (strain ATCC CRL-10679 / Arkansas).